The chain runs to 100 residues: MLDNSRLRIAIQKSGRLSEDSRELLSRCGIKVNLHTQRLIALAENMPIDILRVRDDDIPGLIMNGVVDLGIIGENVLEEELLNRRAQGEDPRHFNPRRLD.

This sequence belongs to the ATP phosphoribosyltransferase family. Long subfamily. Equilibrium between an active dimeric form, an inactive hexameric form and higher aggregates. Interconversion between the various forms is largely reversible and is influenced by the natural substrates and inhibitors of the enzyme. Mg(2+) serves as cofactor.

Its subcellular location is the cytoplasm. The catalysed reaction is 1-(5-phospho-beta-D-ribosyl)-ATP + diphosphate = 5-phospho-alpha-D-ribose 1-diphosphate + ATP. Its pathway is amino-acid biosynthesis; L-histidine biosynthesis; L-histidine from 5-phospho-alpha-D-ribose 1-diphosphate: step 1/9. Feedback inhibited by histidine. Its function is as follows. Catalyzes the condensation of ATP and 5-phosphoribose 1-diphosphate to form N'-(5'-phosphoribosyl)-ATP (PR-ATP). Has a crucial role in the pathway because the rate of histidine biosynthesis seems to be controlled primarily by regulation of HisG enzymatic activity. In Klebsiella pneumoniae, this protein is ATP phosphoribosyltransferase (hisG).